Here is a 294-residue protein sequence, read N- to C-terminus: MQTFHHQDTGSEDFRQNTMDEKWADDDEFSTPQITQNADGTKTIVTHRMDDGKKYKRSVTIKNQSVTEKVLNCVAERSKWTKYGKELGAPPGPNRMTTTIGEDIVFVLGLKSDQPEEEVEEEEAAAAAPRVGEDKGVKCRLCQGPHFTSKCPYKETLGGSTAAGGMGRSLGGDEPAGAAKTGGYVPPHLRNKGPGGPGGPGGAAGGRSDDDDELTLRVTNLSEEATDDDLRRMFGKYGMINRVYVAKDRDTGRPRGFAFVTYTLKSHAQAALEAMDGHGFDNLIMKVDYSKKRN.

Residues 1–22 (MQTFHHQDTGSEDFRQNTMDEK) are compositionally biased toward basic and acidic residues. 2 disordered regions span residues 1–42 (MQTF…DGTK) and 164–211 (GGMG…SDDD). Over residues 30–42 (STPQITQNADGTK) the composition is skewed to polar residues. A compositionally biased stretch (gly residues) spans 193 to 205 (GPGGPGGPGGAAG). The region spanning 214–292 (LTLRVTNLSE…LIMKVDYSKK (79 aa)) is the RRM domain.

It belongs to the eIF-3 subunit G family. In terms of assembly, component of the eukaryotic translation initiation factor 3 (eIF-3) complex.

It is found in the cytoplasm. RNA-binding component of the eukaryotic translation initiation factor 3 (eIF-3) complex, which is involved in protein synthesis of a specialized repertoire of mRNAs and, together with other initiation factors, stimulates binding of mRNA and methionyl-tRNAi to the 40S ribosome. The eIF-3 complex specifically targets and initiates translation of a subset of mRNAs involved in cell proliferation. This subunit can bind 18S rRNA. This is Eukaryotic translation initiation factor 3 subunit G from Yarrowia lipolytica (strain CLIB 122 / E 150) (Yeast).